The primary structure comprises 109 residues: Ferredoxin (109 aa).

4Fe-4S ferredoxin-type domains follow at residues 2 to 30 (TYVV…YEGE) and 31 to 60 (FMLV…PESP). Residues Cys9 and Cys17 each coordinate [3Fe-4S] cluster. [4Fe-4S] cluster is bound by residues Cys21, Cys40, Cys43, and Cys46. Residue Cys50 participates in [3Fe-4S] cluster binding.

[4Fe-4S] cluster is required as a cofactor. It depends on [3Fe-4S] cluster as a cofactor.

In terms of biological role, ferredoxins are iron-sulfur proteins that transfer electrons in a wide variety of metabolic reactions. The sequence is that of Ferredoxin (fdxA) from Rickettsia felis (strain ATCC VR-1525 / URRWXCal2) (Rickettsia azadi).